The sequence spans 369 residues: Anhydro-N-acetylmuramic acid kinase (369 aa).

12–19 (GTSMDGVD) is a binding site for ATP.

The protein belongs to the anhydro-N-acetylmuramic acid kinase family.

The catalysed reaction is 1,6-anhydro-N-acetyl-beta-muramate + ATP + H2O = N-acetyl-D-muramate 6-phosphate + ADP + H(+). The protein operates within amino-sugar metabolism; 1,6-anhydro-N-acetylmuramate degradation. Its pathway is cell wall biogenesis; peptidoglycan recycling. Catalyzes the specific phosphorylation of 1,6-anhydro-N-acetylmuramic acid (anhMurNAc) with the simultaneous cleavage of the 1,6-anhydro ring, generating MurNAc-6-P. Is required for the utilization of anhMurNAc either imported from the medium or derived from its own cell wall murein, and thus plays a role in cell wall recycling. The polypeptide is Anhydro-N-acetylmuramic acid kinase (Shewanella baltica (strain OS155 / ATCC BAA-1091)).